Here is a 461-residue protein sequence, read N- to C-terminus: Argininosuccinate lyase (461 aa).

The protein belongs to the lyase 1 family. Argininosuccinate lyase subfamily.

The protein resides in the cytoplasm. The catalysed reaction is 2-(N(omega)-L-arginino)succinate = fumarate + L-arginine. Its pathway is amino-acid biosynthesis; L-arginine biosynthesis; L-arginine from L-ornithine and carbamoyl phosphate: step 3/3. With respect to regulation, strongly inhibited by L-arginine. Inhibitory effects are lowered at pH 7.0 compared to those at pH 8.0. At 42 degrees Celsius and pH 8.0, activity decreases to 77% and 25% in the presence of 1 mM and 10 mM arginine, respectively. The other amino and organic acids do not affect activity. Its function is as follows. Catalyzes the last step of arginine biosynthesis, the conversion of argininosuccinate into L-arginine and fumarate. The polypeptide is Argininosuccinate lyase (Nostoc sp. (strain PCC 7120 / SAG 25.82 / UTEX 2576)).